A 650-amino-acid polypeptide reads, in one-letter code: Aminopeptidase B (650 aa).

At Ser7 the chain carries Phosphoserine. 298-302 (GGMEN) contributes to the substrate binding site. Residue His325 participates in Zn(2+) binding. The active-site Proton acceptor is Glu326. Positions 329 and 348 each coordinate Zn(2+). Lys446 carries the post-translational modification N6-acetyllysine.

It belongs to the peptidase M1 family. In terms of assembly, monomer. The cofactor is Zn(2+). As to expression, widely expressed.

It localises to the secreted. It catalyses the reaction Release of N-terminal Arg and Lys from oligopeptides when P1' is not Pro. Also acts on arylamides of Arg and Lys.. In terms of biological role, exopeptidase which selectively removes arginine and/or lysine residues from the N-terminus of several peptide substrates including Arg(0)-Leu-enkephalin, Arg(0)-Met-enkephalin and Arg(-1)-Lys(0)-somatostatin-14. Can hydrolyze leukotriene A4 (LTA-4) into leukotriene B4 (LTB-4). The sequence is that of Aminopeptidase B (Rnpep) from Rattus norvegicus (Rat).